A 360-amino-acid polypeptide reads, in one-letter code: Phospho-N-acetylmuramoyl-pentapeptide-transferase (360 aa).

The next 10 helical transmembrane spans lie at 26 to 46 (AILGLLTALMFSLWWGPKLIE), 74 to 94 (MGGLMILGAIFISVLLWGDLG), 97 to 117 (YVWVMLFVLGSFGMIGFIDDY), 132 to 152 (WKYILQSLAALIIAFFLYTTA), 168 to 188 (VMPQLGAVFIVLAYFTIVGSS), 199 to 219 (GLAIMPTVMVAAAFALIAYLS), 236 to 256 (SGELVIVCTAIVGAGLGFLWF), 263 to 283 (VFMGDVGSLSLGAALGAIAVL), 288 to 308 (ILLVIMGGVFVMETVSVILQV), and 338 to 358 (VIVRFWIISIFLVLLGLATLK).

The protein belongs to the glycosyltransferase 4 family. MraY subfamily. Requires Mg(2+) as cofactor.

The protein localises to the cell inner membrane. It carries out the reaction UDP-N-acetyl-alpha-D-muramoyl-L-alanyl-gamma-D-glutamyl-meso-2,6-diaminopimeloyl-D-alanyl-D-alanine + di-trans,octa-cis-undecaprenyl phosphate = di-trans,octa-cis-undecaprenyl diphospho-N-acetyl-alpha-D-muramoyl-L-alanyl-D-glutamyl-meso-2,6-diaminopimeloyl-D-alanyl-D-alanine + UMP. It functions in the pathway cell wall biogenesis; peptidoglycan biosynthesis. Functionally, catalyzes the initial step of the lipid cycle reactions in the biosynthesis of the cell wall peptidoglycan: transfers peptidoglycan precursor phospho-MurNAc-pentapeptide from UDP-MurNAc-pentapeptide onto the lipid carrier undecaprenyl phosphate, yielding undecaprenyl-pyrophosphoryl-MurNAc-pentapeptide, known as lipid I. This chain is Phospho-N-acetylmuramoyl-pentapeptide-transferase, found in Shewanella sp. (strain ANA-3).